The chain runs to 173 residues: Mesencephalic astrocyte-derived neurotrophic factor homolog (173 aa).

A signal peptide spans 1-22 (MKTWYMVVVIGFLATLVQTSLA). Cystine bridges form between Cys28–Cys114, Cys31–Cys103, Cys61–Cys72, and Cys148–Cys151.

The protein belongs to the ARMET family.

It localises to the secreted. In terms of biological role, required during the maturation of the embryonic nervous system for maintenance of neuronal and cuticular connectivity. Essential for maintenance of dopaminergic neurons and dopamine levels. In Drosophila yakuba (Fruit fly), this protein is Mesencephalic astrocyte-derived neurotrophic factor homolog.